Consider the following 282-residue polypeptide: 2-dehydro-3-deoxyphosphooctonate aldolase (282 aa).

The protein belongs to the KdsA family.

The protein localises to the cytoplasm. The enzyme catalyses D-arabinose 5-phosphate + phosphoenolpyruvate + H2O = 3-deoxy-alpha-D-manno-2-octulosonate-8-phosphate + phosphate. Its pathway is carbohydrate biosynthesis; 3-deoxy-D-manno-octulosonate biosynthesis; 3-deoxy-D-manno-octulosonate from D-ribulose 5-phosphate: step 2/3. It functions in the pathway bacterial outer membrane biogenesis; lipopolysaccharide biosynthesis. This is 2-dehydro-3-deoxyphosphooctonate aldolase from Shewanella baltica (strain OS223).